A 316-amino-acid chain; its full sequence is MNELDGIKQFTTVVADSCDIESIRHYHPQDATANPSLLLKAAGLSQYEHLIDDAIAWGKKNGKTQEQQVVAACDKLAVNFGAEILKIVPGCVSTEVDARLSFDKEKSIEKARHLVDLYQQQGVEKSRILIKLASTWEGIRAAEELEKEGINCNLTLLFSFTQARACAEAGVFLISPFVGRIYDWYQARKPMDPYVVEEDPGVKSVRNIYDYYKQHHYETIVMGASFRRTEQILALTGCDRLTIAPNLLKELQEKVSPVVRKLIPPSQTFPRPAPMSEAEFRWEHNQDAMAVEKLSEGIRLFAVDQRKLEDLLAAKL.

Lysine 131 (schiff-base intermediate with substrate) is an active-site residue.

Belongs to the transaldolase family. Type 1 subfamily. Homodimer.

Its subcellular location is the cytoplasm. The catalysed reaction is D-sedoheptulose 7-phosphate + D-glyceraldehyde 3-phosphate = D-erythrose 4-phosphate + beta-D-fructose 6-phosphate. Its pathway is carbohydrate degradation; pentose phosphate pathway; D-glyceraldehyde 3-phosphate and beta-D-fructose 6-phosphate from D-ribose 5-phosphate and D-xylulose 5-phosphate (non-oxidative stage): step 2/3. Transaldolase is important for the balance of metabolites in the pentose-phosphate pathway. This is Transaldolase A from Shigella flexneri.